We begin with the raw amino-acid sequence, 224 residues long: Small ribosomal subunit protein uS3 (224 aa).

The 69-residue stretch at Ile-39 to Lys-107 folds into the KH type-2 domain.

Belongs to the universal ribosomal protein uS3 family. Part of the 30S ribosomal subunit. Forms a tight complex with proteins S10 and S14.

In terms of biological role, binds the lower part of the 30S subunit head. Binds mRNA in the 70S ribosome, positioning it for translation. The chain is Small ribosomal subunit protein uS3 from Chlamydia trachomatis serovar A (strain ATCC VR-571B / DSM 19440 / HAR-13).